Consider the following 124-residue polypeptide: Small ribosomal subunit protein uS12 (124 aa).

The tract at residues 1–24 (MPTINQLVRQGRKKSVKKTNTPAL) is disordered. D89 carries the post-translational modification 3-methylthioaspartic acid.

It belongs to the universal ribosomal protein uS12 family. Part of the 30S ribosomal subunit. Contacts proteins S8 and S17. May interact with IF1 in the 30S initiation complex.

With S4 and S5 plays an important role in translational accuracy. Functionally, interacts with and stabilizes bases of the 16S rRNA that are involved in tRNA selection in the A site and with the mRNA backbone. Located at the interface of the 30S and 50S subunits, it traverses the body of the 30S subunit contacting proteins on the other side and probably holding the rRNA structure together. The combined cluster of proteins S8, S12 and S17 appears to hold together the shoulder and platform of the 30S subunit. In Desulfotalea psychrophila (strain LSv54 / DSM 12343), this protein is Small ribosomal subunit protein uS12.